The sequence spans 600 residues: Pyranose dehydrogenase (600 aa).

The N-terminal stretch at 1-25 (MFPRVVRLNSRLVSFALLGLQIANG) is a signal peptide. Residues Asn-99 and Asn-114 are each glycosylated (N-linked (GlcNAc...) asparagine). At His-127 the chain carries Tele-8alpha-FAD histidine. 5 N-linked (GlcNAc...) asparagine glycosylation sites follow: Asn-199, Asn-275, Asn-342, Asn-399, and Asn-507. Residue His-535 is the Proton acceptor of the active site. A glycan (N-linked (GlcNAc...) asparagine) is linked at Asn-546. Residue His-579 is part of the active site.

The protein belongs to the GMC oxidoreductase family. As to quaternary structure, monomer. FAD serves as cofactor. N-glycosylated.

It is found in the secreted. The catalysed reaction is pyranose + acceptor = pyranos-2-ulose + reduced acceptor.. It catalyses the reaction pyranose + acceptor = pyranos-3-ulose + reduced acceptor.. The enzyme catalyses pyranose + acceptor = pyranos-2,3-diulose + reduced acceptor.. It carries out the reaction a pyranoside + acceptor = a pyranosid-3-ulose + reduced acceptor.. The catalysed reaction is a pyranoside + acceptor = a pyranosid-3,4-diulose + reduced acceptor.. Its function is as follows. Catalyzes the single-oxidation or sequential double oxidation reaction of carbohydrates primarily at carbon-2 and/or carbon-3 with the concomitant reduction of the flavin. The enzyme exhibits a broad sugar substrate specificity, oxidizing different aldopyranoses to the corresponding C-1, C-2, C-3 or C-1,2, C-2,3 and C-3,4 (di)dehydro sugars with substrate-specific regioselectivity. Accepts only a narrow range of electron acceptors such as substituted benzoquinones and complexed metal ions and reacts extremely slowly with O(2) as acceptor. May play a role in the natural recycling of plant matter by oxidizing all major monosaccharides in lignocellulose and by reducing quinone compounds or reactive radical species generated during lignin depolymerization. The protein is Pyranose dehydrogenase of Agaricus xanthodermus (Poison yellow meadow mushroom).